A 545-amino-acid polypeptide reads, in one-letter code: Chaperonin GroEL (545 aa).

Residues 30–33 (TLGP), Lys-51, 87–91 (DGTTT), Gly-415, 479–481 (NAA), and Asp-495 contribute to the ATP site.

This sequence belongs to the chaperonin (HSP60) family. As to quaternary structure, forms a cylinder of 14 subunits composed of two heptameric rings stacked back-to-back. Interacts with the co-chaperonin GroES.

It is found in the cytoplasm. The catalysed reaction is ATP + H2O + a folded polypeptide = ADP + phosphate + an unfolded polypeptide.. Its function is as follows. Together with its co-chaperonin GroES, plays an essential role in assisting protein folding. The GroEL-GroES system forms a nano-cage that allows encapsulation of the non-native substrate proteins and provides a physical environment optimized to promote and accelerate protein folding. In Cellvibrio japonicus (strain Ueda107) (Pseudomonas fluorescens subsp. cellulosa), this protein is Chaperonin GroEL.